A 90-amino-acid chain; its full sequence is uncharacterized protein (90 aa).

This is an uncharacterized protein from Bacillus subtilis (strain 168).